The sequence spans 547 residues: ATP synthase subunit alpha (547 aa).

172 to 179 is a binding site for ATP; sequence GDRKTGKT.

This sequence belongs to the ATPase alpha/beta chains family. In terms of assembly, F-type ATPases have 2 components, CF(1) - the catalytic core - and CF(0) - the membrane proton channel. CF(1) has five subunits: alpha(3), beta(3), gamma(1), delta(1), epsilon(1). CF(0) has three main subunits: a(1), b(2) and c(9-12). The alpha and beta chains form an alternating ring which encloses part of the gamma chain. CF(1) is attached to CF(0) by a central stalk formed by the gamma and epsilon chains, while a peripheral stalk is formed by the delta and b chains.

The protein localises to the cell membrane. The enzyme catalyses ATP + H2O + 4 H(+)(in) = ADP + phosphate + 5 H(+)(out). In terms of biological role, produces ATP from ADP in the presence of a proton gradient across the membrane. The alpha chain is a regulatory subunit. The sequence is that of ATP synthase subunit alpha from Rhodococcus erythropolis (strain PR4 / NBRC 100887).